A 103-amino-acid polypeptide reads, in one-letter code: Large ribosomal subunit protein bL21 (103 aa).

It belongs to the bacterial ribosomal protein bL21 family. Part of the 50S ribosomal subunit. Contacts protein L20.

Functionally, this protein binds to 23S rRNA in the presence of protein L20. The chain is Large ribosomal subunit protein bL21 from Nautilia profundicola (strain ATCC BAA-1463 / DSM 18972 / AmH).